We begin with the raw amino-acid sequence, 63 residues long: Hyphancin-3E (63 aa).

A signal peptide spans 1-22 (MNFSRILFFVFTCFVALASVSG). The propeptide at 23-26 (APEP) is removed by a dipeptidylpeptidase. Position 61 is a leucine amide (Leu-61).

The protein belongs to the cecropin family.

Its subcellular location is the secreted. Has antibacterial activity. This chain is Hyphancin-3E, found in Hyphantria cunea (Fall webworm moth).